A 642-amino-acid chain; its full sequence is Mini-chromosome maintenance complex-binding protein (642 aa).

The segment covering 151–161 (ARVSPSTSYTP) has biased composition (polar residues). The interval 151 to 188 (ARVSPSTSYTPSRHKRSYEDDEDMDLQPNKQKDQHMGA) is disordered. Residue S154 is modified to Phosphoserine. The residue at position 160 (T160) is a Phosphothreonine. Phosphoserine occurs at positions 167 and 298.

The protein belongs to the MCMBP family. As to quaternary structure, interacts with the MCM complex: associates with the MCM3-7 complex which lacks MCM2, while it does not interact with the MCM complex when MCM2 is present (MCM2-7 complex). Interacts with the RPA complex, when composed of all RPA1, RPA2 and RPA3 components, but not with RPA1 or RPA2 alone.

It is found in the nucleus. In terms of biological role, associated component of the MCM complex that acts as a regulator of DNA replication. Binds to the MCM complex during late S phase and promotes the disassembly of the MCM complex from chromatin, thereby acting as a key regulator of pre-replication complex (pre-RC) unloading from replicated DNA. Can dissociate the MCM complex without addition of ATP; probably acts by destabilizing interactions of each individual subunits of the MCM complex. Required for sister chromatid cohesion. This chain is Mini-chromosome maintenance complex-binding protein (MCMBP), found in Bos taurus (Bovine).